A 361-amino-acid chain; its full sequence is Terpene synthase 6 (361 aa).

The short motif at 81–86 (DDVLDA) is the DDxx(x)D/E motif element. The NDxxSxxxD/E motif motif lies at 223–231 (NDLVSYEKE).

The protein belongs to the terpene synthase family.

It catalyses the reaction (2E,6E)-farnesyl diphosphate = (2S,3R,6S,9S)-(-)-protoillud-7-ene + diphosphate. In terms of biological role, terpene synthase that converts its substrate farnesyl diphosphate (FPP) into the sesquiterpene (2S,3R,6S,9S)-(-)-protoillud-7-ene. This Dictyostelium discoideum (Social amoeba) protein is Terpene synthase 6.